We begin with the raw amino-acid sequence, 367 residues long: o-succinylbenzoate synthase (367 aa).

The active-site Proton donor is Lys164. Mg(2+) contacts are provided by Asp189, Glu214, and Asp239. Lys263 functions as the Proton acceptor in the catalytic mechanism.

Belongs to the mandelate racemase/muconate lactonizing enzyme family. MenC type 2 subfamily. Homodimer. The cofactor is a divalent metal cation.

It carries out the reaction (1R,6R)-6-hydroxy-2-succinyl-cyclohexa-2,4-diene-1-carboxylate = 2-succinylbenzoate + H2O. Its pathway is quinol/quinone metabolism; 1,4-dihydroxy-2-naphthoate biosynthesis; 1,4-dihydroxy-2-naphthoate from chorismate: step 4/7. It participates in quinol/quinone metabolism; menaquinone biosynthesis. In terms of biological role, converts 2-succinyl-6-hydroxy-2,4-cyclohexadiene-1-carboxylate (SHCHC) to 2-succinylbenzoate (OSB). Also acts as a N-succinylamino acid racemase (NSAR) that catalyzes the racemization of N-succinyl-L-phenylglycine. Since the gene is encoded in a menaquinone synthesis operon, OSB synthase is probably the physiological activity. A pathway that requires NSAR activity has not been identified in this species, so whether NSAR is also a biological activity is unknown. This chain is o-succinylbenzoate synthase, found in Enterococcus faecalis (strain ATCC 700802 / V583).